We begin with the raw amino-acid sequence, 403 residues long: Multifunctional CCA protein (403 aa).

2 residues coordinate ATP: glycine 8 and arginine 11. Residues glycine 8 and arginine 11 each contribute to the CTP site. Mg(2+) is bound by residues aspartate 21 and aspartate 23. Arginine 91, arginine 137, and arginine 140 together coordinate ATP. Residues arginine 91, arginine 137, and arginine 140 each contribute to the CTP site. The 102-residue stretch at 228–329 (TGIHTLMVAK…LKVLGLLDVW (102 aa)) folds into the HD domain.

Belongs to the tRNA nucleotidyltransferase/poly(A) polymerase family. Bacterial CCA-adding enzyme type 1 subfamily. As to quaternary structure, monomer. Can also form homodimers and oligomers. Mg(2+) is required as a cofactor. Requires Ni(2+) as cofactor.

It carries out the reaction a tRNA precursor + 2 CTP + ATP = a tRNA with a 3' CCA end + 3 diphosphate. The enzyme catalyses a tRNA with a 3' CCA end + 2 CTP + ATP = a tRNA with a 3' CCACCA end + 3 diphosphate. Catalyzes the addition and repair of the essential 3'-terminal CCA sequence in tRNAs without using a nucleic acid template. Adds these three nucleotides in the order of C, C, and A to the tRNA nucleotide-73, using CTP and ATP as substrates and producing inorganic pyrophosphate. tRNA 3'-terminal CCA addition is required both for tRNA processing and repair. Also involved in tRNA surveillance by mediating tandem CCA addition to generate a CCACCA at the 3' terminus of unstable tRNAs. While stable tRNAs receive only 3'-terminal CCA, unstable tRNAs are marked with CCACCA and rapidly degraded. The protein is Multifunctional CCA protein of Vibrio cholerae serotype O1 (strain ATCC 39541 / Classical Ogawa 395 / O395).